The primary structure comprises 428 residues: MSNALPKGVFDIFPYVTSPKNLWRNSSLWKRVEHAAHRICNLYGFDEIRTPVFEKTETFLRVGEHSDIVKKEVYTFLDKKGRSLTLRPEGTAAVVRALLDHSADMRKDNKFYYILPMFRYERQQSGRYRQHHQFGLEAIGVRHPLRDAEVLSLLWDFYAAVGLQHMQIHVNFLGGQKTRARYDEALREFFRKDLDRLSPLSQERYHANLLRILDSKEPEDQEFIEKAPSILDYIDDRDLSYFDAVLAQLKALGIPFAINPRLVRGLDYYTDLVFEAVTVVGERSYALGGGGRYDELVAQSGGPSMPAFGFGVGLERVIQTLLEQGNSLSTSTRRLRLIPMDEQADAFCFSWANRLRNLGIATEVDWSHKKPKLSLKDAADQQVSFVCLLGEQELATKQFIVKDMSLHQSFSGAQQDVEQRLVYEVQNA.

This sequence belongs to the class-II aminoacyl-tRNA synthetase family. In terms of assembly, homodimer.

The protein resides in the cytoplasm. It catalyses the reaction tRNA(His) + L-histidine + ATP = L-histidyl-tRNA(His) + AMP + diphosphate + H(+). This Chlamydia trachomatis serovar L2 (strain ATCC VR-902B / DSM 19102 / 434/Bu) protein is Histidine--tRNA ligase.